The following is a 669-amino-acid chain: Dymeclin (669 aa).

The N-myristoyl glycine moiety is linked to residue Gly2.

It belongs to the dymeclin family. Post-translationally, myristoylated in vitro; myristoylation is not essential for protein targeting to Golgi compartment.

It localises to the cytoplasm. The protein resides in the golgi apparatus. Its function is as follows. Necessary for correct organization of Golgi apparatus. This Xenopus laevis (African clawed frog) protein is Dymeclin (dym).